The sequence spans 728 residues: Lutropin-choriogonadotropic hormone receptor (728 aa).

Residues 1 to 19 (MLPALLPLLLPALLPGAGG) form the signal peptide. Over 20-389 (GRCPQRCACT…DILGYSFLRV (370 aa)) the chain is Extracellular. 6 LRR repeats span residues 92 to 116 (LPAL…AFRN), 117 to 142 (LPRL…IFSS), 144 to 166 (AHFI…AFQG), 168 to 191 (SNES…AFNG), 193 to 215 (KLNQ…ALRG), and 216 to 239 (ATGP…GLEA). The helical transmembrane segment at 390-410 (LIWFINILALAGNFIVLLVLI) threads the bilayer. Topologically, residues 411–420 (TSHYKLTVPR) are cytoplasmic. A helical membrane pass occupies residues 421–441 (FLMCNLSFADFCMGLYLLLIA). Residues 442-466 (SVDAQTSGQYYNHAIDWQTGSGCST) are Extracellular-facing. Cysteines 464 and 539 form a disulfide. Residues 467 to 487 (AGFFTVFASELSVYTLTVITI) traverse the membrane as a helical segment. The Cytoplasmic segment spans residues 488-507 (ERWHTITYAMQLDRKLRLRH). Residues 508–528 (AVPIMLGGWVFSILIAVLPLL) form a helical membrane-spanning segment. The Extracellular portion of the chain corresponds to 529–551 (GVSSYMKVSICLPMDIETGLSQA). Residues 552 to 572 (YILLILMLNVIAFLVICACYI) form a helical membrane-spanning segment. Over 573-595 (KIYVAVQNPELVAANKDTKIAKR) the chain is Cytoplasmic. A helical transmembrane segment spans residues 596-616 (MAILIFTDFTCMAPISFFAIS). At 617–630 (AAIKVPLITVTNSK) the chain is on the extracellular side. Residues 631 to 651 (ILLVLFYPVNSCANPFLYAIF) traverse the membrane as a helical segment. Over 652–728 (TKAFQRDFFL…STKKSQPECQ (77 aa)) the chain is Cytoplasmic.

This sequence belongs to the G-protein coupled receptor 1 family. FSH/LSH/TSH subfamily. As to expression, expressed in ovarian follicle granulosa cells. Expressed in ovarian follicle theca cells.

The protein localises to the cell membrane. Its function is as follows. Receptor for lutropin-choriogonadotropic hormone. The activity of this receptor is mediated by G proteins which activate adenylate cyclase. The sequence is that of Lutropin-choriogonadotropic hormone receptor from Gallus gallus (Chicken).